The sequence spans 167 residues: Peptide deformylase (167 aa).

Fe cation contacts are provided by C91 and H133. The active site involves E134. H137 is a binding site for Fe cation.

It belongs to the polypeptide deformylase family. It depends on Fe(2+) as a cofactor.

The enzyme catalyses N-terminal N-formyl-L-methionyl-[peptide] + H2O = N-terminal L-methionyl-[peptide] + formate. Its function is as follows. Removes the formyl group from the N-terminal Met of newly synthesized proteins. Requires at least a dipeptide for an efficient rate of reaction. N-terminal L-methionine is a prerequisite for activity but the enzyme has broad specificity at other positions. The sequence is that of Peptide deformylase from Buchnera aphidicola subsp. Schizaphis graminum (strain Sg).